The chain runs to 214 residues: Phosphopantothenoylcysteine decarboxylase HAL3 (214 aa).

FMN is bound by residues 30–32 and 55–57; these read GSV and TRA. His92 acts as the Proton donor in catalysis. FMN-binding positions include 108 to 111 and Ala142; that span reads SANT. Residues Asn144, Arg174, and Ala176 each contribute to the N-[(R)-4-phosphopantothenoyl]-L-cysteine site. Catalysis depends on Cys177, which acts as the Proton donor. Met185 lines the N-[(R)-4-phosphopantothenoyl]-L-cysteine pocket.

This sequence belongs to the HFCD (homooligomeric flavin containing Cys decarboxylase) superfamily. Homotrimer. FMN serves as cofactor. As to expression, mainly expressed in stems, to a lower extent in flowers, leaves and fruits, and at basal levels in roots.

It localises to the cell membrane. The protein resides in the cytoplasm. It catalyses the reaction N-[(R)-4-phosphopantothenoyl]-L-cysteine + H(+) = (R)-4'-phosphopantetheine + CO2. It functions in the pathway cofactor biosynthesis; coenzyme A biosynthesis; CoA from (R)-pantothenate: step 3/5. Involved in plant growth, and promotes salt and osmotic tolerance, probably via coenzyme A (CoA) accumulation and endogenous proline accumulation. Catalyzes the decarboxylation of 4'-phosphopantothenoylcysteine to 4'-phosphopantetheine, a key step in coenzyme A biosynthesis. Required for roots development. In Malus domestica (Apple), this protein is Phosphopantothenoylcysteine decarboxylase HAL3.